The following is a 192-amino-acid chain: MSKQDDMRAYLPPFLTSLKEMAELLKAEAPEFDKQNDSIFDLTDQLFVPTATWGLSRWEKILNVPRESGDTDEIRRLRLISKMSNIPPITYRAIEQAVNRFLKNPSAQVRLLPGEYRFNVDINVDDLQHMNELIEAIENMKPAHLAYTLRGGLNETLRIKDTVILNHRRYRTASELKVGYSVTLNNNEVVLT.

This sequence to B.subtilis YqcA.

The polypeptide is Phage-like element PBSX protein XkdU (xkdU) (Bacillus subtilis (strain 168)).